Here is a 720-residue protein sequence, read N- to C-terminus: 1,4-alpha-glucan branching enzyme GlgB (720 aa).

The active-site Nucleophile is D400. Residue E453 is the Proton donor of the active site.

The protein belongs to the glycosyl hydrolase 13 family. GlgB subfamily. In terms of assembly, monomer.

The enzyme catalyses Transfers a segment of a (1-&gt;4)-alpha-D-glucan chain to a primary hydroxy group in a similar glucan chain.. Its pathway is glycan biosynthesis; glycogen biosynthesis. In terms of biological role, catalyzes the formation of the alpha-1,6-glucosidic linkages in glycogen by scission of a 1,4-alpha-linked oligosaccharide from growing alpha-1,4-glucan chains and the subsequent attachment of the oligosaccharide to the alpha-1,6 position. This chain is 1,4-alpha-glucan branching enzyme GlgB, found in Chlamydia pneumoniae (Chlamydophila pneumoniae).